An 88-amino-acid polypeptide reads, in one-letter code: HssA/B-like protein 6 (88 aa).

A disordered region spans residues 1–22 (MSILSALTSISNPMKSSNSNVA).

It belongs to the hssA/B family.

The sequence is that of HssA/B-like protein 6 (hssl6) from Dictyostelium discoideum (Social amoeba).